Here is a 182-residue protein sequence, read N- to C-terminus: Large ribosomal subunit protein uL10 (182 aa).

It belongs to the universal ribosomal protein uL10 family. In terms of assembly, part of the ribosomal stalk of the 50S ribosomal subunit. The N-terminus interacts with L11 and the large rRNA to form the base of the stalk. The C-terminus forms an elongated spine to which L12 dimers bind in a sequential fashion forming a multimeric L10(L12)X complex.

In terms of biological role, forms part of the ribosomal stalk, playing a central role in the interaction of the ribosome with GTP-bound translation factors. The polypeptide is Large ribosomal subunit protein uL10 (Microcystis aeruginosa (strain NIES-843 / IAM M-2473)).